Here is a 939-residue protein sequence, read N- to C-terminus: Valine--tRNA ligase (939 aa).

Positions 47-57 (PNVTGILHMGH) match the 'HIGH' region motif. The 'KMSKS' region motif lies at 563–567 (KLSKS). Residue lysine 566 participates in ATP binding. Residues 874–939 (EHLAKERVRL…QSILDKLASL (66 aa)) adopt a coiled-coil conformation.

This sequence belongs to the class-I aminoacyl-tRNA synthetase family. ValS type 1 subfamily. As to quaternary structure, monomer.

It localises to the cytoplasm. The enzyme catalyses tRNA(Val) + L-valine + ATP = L-valyl-tRNA(Val) + AMP + diphosphate. Its function is as follows. Catalyzes the attachment of valine to tRNA(Val). As ValRS can inadvertently accommodate and process structurally similar amino acids such as threonine, to avoid such errors, it has a 'posttransfer' editing activity that hydrolyzes mischarged Thr-tRNA(Val) in a tRNA-dependent manner. The sequence is that of Valine--tRNA ligase from Chlamydia trachomatis serovar L2b (strain UCH-1/proctitis).